The primary structure comprises 187 residues: Large ribosomal subunit protein uL5 (187 aa).

This sequence belongs to the universal ribosomal protein uL5 family. As to quaternary structure, part of the 50S ribosomal subunit; part of the 5S rRNA/L5/L18/L25 subcomplex. Contacts the 5S rRNA and the P site tRNA. Forms a bridge to the 30S subunit in the 70S ribosome.

Functionally, this is one of the proteins that bind and probably mediate the attachment of the 5S RNA into the large ribosomal subunit, where it forms part of the central protuberance. In the 70S ribosome it contacts protein S13 of the 30S subunit (bridge B1b), connecting the 2 subunits; this bridge is implicated in subunit movement. Contacts the P site tRNA; the 5S rRNA and some of its associated proteins might help stabilize positioning of ribosome-bound tRNAs. The sequence is that of Large ribosomal subunit protein uL5 from Mycobacterium bovis (strain ATCC BAA-935 / AF2122/97).